A 137-amino-acid chain; its full sequence is Large ribosomal subunit protein uL16 (137 aa).

This sequence belongs to the universal ribosomal protein uL16 family. In terms of assembly, part of the 50S ribosomal subunit.

Functionally, binds 23S rRNA and is also seen to make contacts with the A and possibly P site tRNAs. This Psychrobacter arcticus (strain DSM 17307 / VKM B-2377 / 273-4) protein is Large ribosomal subunit protein uL16.